Here is a 472-residue protein sequence, read N- to C-terminus: Proline--tRNA ligase (472 aa).

This sequence belongs to the class-II aminoacyl-tRNA synthetase family. ProS type 3 subfamily. As to quaternary structure, homodimer.

It localises to the cytoplasm. The enzyme catalyses tRNA(Pro) + L-proline + ATP = L-prolyl-tRNA(Pro) + AMP + diphosphate. Its function is as follows. Catalyzes the attachment of proline to tRNA(Pro) in a two-step reaction: proline is first activated by ATP to form Pro-AMP and then transferred to the acceptor end of tRNA(Pro). The sequence is that of Proline--tRNA ligase from Ureaplasma urealyticum serovar 10 (strain ATCC 33699 / Western).